We begin with the raw amino-acid sequence, 318 residues long: Ficolin-1-B (318 aa).

The N-terminal stretch at methionine 1–alanine 19 is a signal peptide. Residues glycine 42–glycine 99 enclose the Collagen-like domain. The 219-residue stretch at isoleucine 100–proline 318 folds into the Fibrinogen C-terminal domain. Cysteines 109 and 137 form a disulfide. Residues asparagine 205 and asparagine 222 are each glycosylated (N-linked (GlcNAc...) asparagine). Aspartate 253 serves as a coordination point for Ca(2+). A glycan (N-linked (GlcNAc...) asparagine) is linked at asparagine 254. The Ca(2+) site is built by aspartate 255 and serine 257. Cysteine 261 and cysteine 274 form a disulfide bridge. Residue serine 273–histidine 275 coordinates a carbohydrate. Asparagine 287 is a glycosylation site (N-linked (GlcNAc...) asparagine).

This sequence belongs to the ficolin lectin family. As to quaternary structure, homotrimer. May form higher-order oligomers. In terms of processing, N-glycosylated. In terms of tissue distribution, expressed in peripheral blood leukocytes. Also detected at lower levels in spleen and lung.

It localises to the secreted. Its function is as follows. May function in innate immunity through activation of the lectin complement pathway. Binds to GalNAc and GlcNAc carbohydrate moieties. The polypeptide is Ficolin-1-B (Xenopus laevis (African clawed frog)).